A 521-amino-acid polypeptide reads, in one-letter code: MINNFDQQIQYIPQFQQMQHQMQQQQQQQMQQQQQQQQQQQPQQMQIQLSTHEERLELASQSSPFEEKVTLNGLQKNIKVVIKNSPFNVQLRLKKANEIDLNCVAFESTLLYDCDTNEEKEVDFVKVKPVEHKASPNETGELVNIELRIKVLTSQHEDMFFRVKIEGQDPISKEPIKGLYALTHSIKVISKPEQLKKKQPPKKRTWNDILLESVSKIQHQQHEQQKLIEKLLQQQAGLSGSTSTTNNNNTTTTTTTTSSNNITSSSAINLPSPPSSTSSSPSSSPSSSPTLVNSHLLTSTLNNTSSNNLNSSSNTLNNNNNNNNNNSNTSTSNNNNCNINNNNNNNNNNNNNNISGFEDSFKQMMNAYTQLDPRQRAEKVRRVFRNASSRDSETLSELLDLFITEGVGGQLGTAVAPLPNSPPRLSNSSTQIQNSNNNNNNNNNNNNNNNNNNNNSNNNNSTNNNNNNNNNNNNNSTIPNNPFMSSHSNNGDPYPFFSNNSFDNDSFNSFGGSSNSEFIPF.

Residues 14–41 (QFQQMQHQMQQQQQQQMQQQQQQQQQQQ) are a coiled coil. Low complexity-rich tracts occupy residues 238–266 (LSGSTSTTNNNNTTTTTTTTSSNNITSSS), 275–353 (SSTS…NNNN), and 423–482 (PRLS…PNNP). 2 disordered regions span residues 238–357 (LSGS…ISGF) and 413–491 (TAVA…SNNG).

This is an uncharacterized protein from Dictyostelium discoideum (Social amoeba).